A 260-amino-acid chain; its full sequence is DNA repair protein RecO (260 aa).

It belongs to the RecO family.

In terms of biological role, involved in DNA repair and RecF pathway recombination. This is DNA repair protein RecO from Streptococcus suis (strain 98HAH33).